Consider the following 294-residue polypeptide: GTPase Era (294 aa).

In terms of domain architecture, Era-type G spans 2–171 (NSGVVTIIGR…LSLLIELLPE (170 aa)). Residues 10 to 17 (GRPSAGKS) are G1. Position 10-17 (10-17 (GRPSAGKS)) interacts with GTP. Residues 36–40 (QTTRN) are G2. Positions 57 to 60 (DTPG) are G3. GTP contacts are provided by residues 57 to 61 (DTPGY) and 119 to 122 (NKAD). The interval 119–122 (NKAD) is G4. The segment at 150–152 (ISA) is G5. The KH type-2 domain maps to 202-280 (TREEIPHALY…QLDLQVRVNK (79 aa)).

Belongs to the TRAFAC class TrmE-Era-EngA-EngB-Septin-like GTPase superfamily. Era GTPase family. As to quaternary structure, monomer.

The protein localises to the cytoplasm. Its subcellular location is the cell inner membrane. Functionally, an essential GTPase that binds both GDP and GTP, with rapid nucleotide exchange. Plays a role in 16S rRNA processing and 30S ribosomal subunit biogenesis and possibly also in cell cycle regulation and energy metabolism. This is GTPase Era from Treponema denticola (strain ATCC 35405 / DSM 14222 / CIP 103919 / JCM 8153 / KCTC 15104).